Consider the following 727-residue polypeptide: Fatty acid oxidation complex subunit alpha (727 aa).

The segment at 1-200 (MNDQQPFSAI…RQGLVDEAVP (200 aa)) is enoyl-CoA hydratase. The interval 316–727 (KPIHYVGILG…PPTDEDDSAS (412 aa)) is 3-hydroxyacyl-CoA dehydrogenase.

It in the N-terminal section; belongs to the enoyl-CoA hydratase/isomerase family. This sequence in the central section; belongs to the 3-hydroxyacyl-CoA dehydrogenase family. Heterotetramer of two alpha chains (FadJ) and two beta chains (FadI).

The protein localises to the cytoplasm. It catalyses the reaction a (3S)-3-hydroxyacyl-CoA = a (2E)-enoyl-CoA + H2O. The catalysed reaction is a 4-saturated-(3S)-3-hydroxyacyl-CoA = a (3E)-enoyl-CoA + H2O. It carries out the reaction a (3S)-3-hydroxyacyl-CoA + NAD(+) = a 3-oxoacyl-CoA + NADH + H(+). The enzyme catalyses (3S)-3-hydroxybutanoyl-CoA = (3R)-3-hydroxybutanoyl-CoA. Its pathway is lipid metabolism; fatty acid beta-oxidation. Its function is as follows. Catalyzes the formation of a hydroxyacyl-CoA by addition of water on enoyl-CoA. Also exhibits 3-hydroxyacyl-CoA epimerase and 3-hydroxyacyl-CoA dehydrogenase activities. This is Fatty acid oxidation complex subunit alpha from Pectobacterium carotovorum subsp. carotovorum (strain PC1).